A 117-amino-acid chain; its full sequence is Large ribosomal subunit protein bL19 (117 aa).

This sequence belongs to the bacterial ribosomal protein bL19 family.

Functionally, this protein is located at the 30S-50S ribosomal subunit interface and may play a role in the structure and function of the aminoacyl-tRNA binding site. The sequence is that of Large ribosomal subunit protein bL19 from Alkalilimnicola ehrlichii (strain ATCC BAA-1101 / DSM 17681 / MLHE-1).